Reading from the N-terminus, the 355-residue chain is UDP-N-acetylglucosamine--N-acetylmuramyl-(pentapeptide) pyrophosphoryl-undecaprenol N-acetylglucosamine transferase (355 aa).

Residues 13–15, Asn-125, Arg-162, Ser-190, Ile-244, and Gln-289 contribute to the UDP-N-acetyl-alpha-D-glucosamine site; that span reads TGG.

Belongs to the glycosyltransferase 28 family. MurG subfamily.

The protein localises to the cell inner membrane. The catalysed reaction is di-trans,octa-cis-undecaprenyl diphospho-N-acetyl-alpha-D-muramoyl-L-alanyl-D-glutamyl-meso-2,6-diaminopimeloyl-D-alanyl-D-alanine + UDP-N-acetyl-alpha-D-glucosamine = di-trans,octa-cis-undecaprenyl diphospho-[N-acetyl-alpha-D-glucosaminyl-(1-&gt;4)]-N-acetyl-alpha-D-muramoyl-L-alanyl-D-glutamyl-meso-2,6-diaminopimeloyl-D-alanyl-D-alanine + UDP + H(+). It functions in the pathway cell wall biogenesis; peptidoglycan biosynthesis. Functionally, cell wall formation. Catalyzes the transfer of a GlcNAc subunit on undecaprenyl-pyrophosphoryl-MurNAc-pentapeptide (lipid intermediate I) to form undecaprenyl-pyrophosphoryl-MurNAc-(pentapeptide)GlcNAc (lipid intermediate II). This is UDP-N-acetylglucosamine--N-acetylmuramyl-(pentapeptide) pyrophosphoryl-undecaprenol N-acetylglucosamine transferase from Neisseria meningitidis serogroup C (strain 053442).